A 307-amino-acid polypeptide reads, in one-letter code: tRNA pseudouridine synthase B (307 aa).

Catalysis depends on Asp38, which acts as the Nucleophile.

It belongs to the pseudouridine synthase TruB family. Type 1 subfamily.

It carries out the reaction uridine(55) in tRNA = pseudouridine(55) in tRNA. Responsible for synthesis of pseudouridine from uracil-55 in the psi GC loop of transfer RNAs. In Bacillus cytotoxicus (strain DSM 22905 / CIP 110041 / 391-98 / NVH 391-98), this protein is tRNA pseudouridine synthase B.